Here is a 297-residue protein sequence, read N- to C-terminus: Phosphatidylinositol N-acetylglucosaminyltransferase subunit C (297 aa).

Helical transmembrane passes span 67–87 (VFVV…WLFG), 88–108 (TGLA…GGDG), 153–173 (SVFM…AAIV), and 239–259 (AFGG…LLLF).

It belongs to the PIGC family. Component of the glycosylphosphatidylinositol-N-acetylglucosaminyltransferase (GPI-GnT) complex composed at least by PIGA, PIGC, PIGH, PIGP, PIGQ, PIGY and DPM2. Interacts with PIGQ. Interacts with the heterodimer PIGA:PIGH.

The protein localises to the endoplasmic reticulum membrane. Its pathway is glycolipid biosynthesis; glycosylphosphatidylinositol-anchor biosynthesis. In terms of biological role, part of the glycosylphosphatidylinositol-N-acetylglucosaminyltransferase (GPI-GnT) complex that catalyzes the transfer of N-acetylglucosamine from UDP-N-acetylglucosamine to phosphatidylinositol and participates in the first step of GPI biosynthesis. This is Phosphatidylinositol N-acetylglucosaminyltransferase subunit C from Rattus norvegicus (Rat).